The primary structure comprises 430 residues: Protein AST2 (430 aa).

Functionally, lipid raft-associated protein involved in the targeting of PMA1 from Golgi to the plasma membrane. May induce clustering of PMA1, which facilitates partition of PMA1 into lipid rafts after leaving the ER its and transport to the cell surface. The chain is Protein AST2 from Saccharomyces cerevisiae (strain ATCC 204508 / S288c) (Baker's yeast).